Here is a 126-residue protein sequence, read N- to C-terminus: Protein HEAT-INDUCED TAS1 TARGET 3 (126 aa).

It belongs to the heat induced plant HTT protein family. As to expression, expressed in seedlings, leaves, stems, inflorescences and siliques.

It localises to the cytoplasm. The protein localises to the nucleus. In terms of biological role, mediates both basal and acquired thermotolerance. The polypeptide is Protein HEAT-INDUCED TAS1 TARGET 3 (Arabidopsis thaliana (Mouse-ear cress)).